Consider the following 447-residue polypeptide: Dimethylsulfoniopropionate lyase DddP (447 aa).

The disordered stretch occupies residues 1-26 (MNRHFNATRKIDPSRGATLGDGSPND). Positions 295, 297, 307, 371, 406, and 421 each coordinate a divalent metal cation.

This sequence belongs to the peptidase M24B family. In terms of assembly, homodimer. The cofactor is a divalent metal cation.

It catalyses the reaction S,S-dimethyl-beta-propiothetin = acrylate + dimethyl sulfide + H(+). Its function is as follows. Able to cleave dimethylsulfoniopropionate (DMSP), releasing dimethyl sulfide (DMS). DMS is the principal form by which sulfur is transported from oceans to the atmosphere. The real activity of the protein is however subject to debate and it is unclear whether it constitutes a real dimethylsulfoniopropionate lyase in vivo: the low activity with DMSP as substrate suggests that DMSP is not its native substrate. The sequence is that of Dimethylsulfoniopropionate lyase DddP from Roseobacter denitrificans (strain ATCC 33942 / OCh 114) (Erythrobacter sp. (strain OCh 114)).